The sequence spans 316 residues: Transaldolase (316 aa).

The active-site Schiff-base intermediate with substrate is Lys-132.

This sequence belongs to the transaldolase family. Type 1 subfamily. Homodimer.

The protein localises to the cytoplasm. It carries out the reaction D-sedoheptulose 7-phosphate + D-glyceraldehyde 3-phosphate = D-erythrose 4-phosphate + beta-D-fructose 6-phosphate. It functions in the pathway carbohydrate degradation; pentose phosphate pathway; D-glyceraldehyde 3-phosphate and beta-D-fructose 6-phosphate from D-ribose 5-phosphate and D-xylulose 5-phosphate (non-oxidative stage): step 2/3. In terms of biological role, transaldolase is important for the balance of metabolites in the pentose-phosphate pathway. This is Transaldolase from Aliivibrio salmonicida (strain LFI1238) (Vibrio salmonicida (strain LFI1238)).